A 276-amino-acid polypeptide reads, in one-letter code: Diaminopimelate epimerase (276 aa).

Positions 13, 46, and 66 each coordinate substrate. Catalysis depends on cysteine 75, which acts as the Proton donor. Substrate contacts are provided by residues 76 to 77 (GN), asparagine 159, asparagine 192, and 210 to 211 (ER). Cysteine 219 serves as the catalytic Proton acceptor. Position 220–221 (220–221 (GS)) interacts with substrate.

It belongs to the diaminopimelate epimerase family. As to quaternary structure, homodimer.

It localises to the cytoplasm. The enzyme catalyses (2S,6S)-2,6-diaminopimelate = meso-2,6-diaminopimelate. Its pathway is amino-acid biosynthesis; L-lysine biosynthesis via DAP pathway; DL-2,6-diaminopimelate from LL-2,6-diaminopimelate: step 1/1. Its function is as follows. Catalyzes the stereoinversion of LL-2,6-diaminopimelate (L,L-DAP) to meso-diaminopimelate (meso-DAP), a precursor of L-lysine and an essential component of the bacterial peptidoglycan. This chain is Diaminopimelate epimerase, found in Colwellia psychrerythraea (strain 34H / ATCC BAA-681) (Vibrio psychroerythus).